A 523-amino-acid polypeptide reads, in one-letter code: 2-isopropylmalate synthase (523 aa).

The Pyruvate carboxyltransferase domain occupies 5-267; the sequence is VIIFDTTLRD…HTAINHQEIW (263 aa). Asp14, His202, His204, and Asn238 together coordinate Mn(2+). Positions 392-523 are regulatory domain; that stretch reads RLDYFSVQSG…QHNENNKETV (132 aa).

This sequence belongs to the alpha-IPM synthase/homocitrate synthase family. LeuA type 1 subfamily. Homodimer. It depends on Mn(2+) as a cofactor.

It is found in the cytoplasm. The enzyme catalyses 3-methyl-2-oxobutanoate + acetyl-CoA + H2O = (2S)-2-isopropylmalate + CoA + H(+). The protein operates within amino-acid biosynthesis; L-leucine biosynthesis; L-leucine from 3-methyl-2-oxobutanoate: step 1/4. Catalyzes the condensation of the acetyl group of acetyl-CoA with 3-methyl-2-oxobutanoate (2-ketoisovalerate) to form 3-carboxy-3-hydroxy-4-methylpentanoate (2-isopropylmalate). The chain is 2-isopropylmalate synthase from Shigella sonnei (strain Ss046).